Reading from the N-terminus, the 441-residue chain is Serine hydroxymethyltransferase (441 aa).

A (6S)-5,6,7,8-tetrahydrofolate-binding site is contributed by 124–126; that stretch reads GHI. N6-(pyridoxal phosphate)lysine is present on K239.

Belongs to the SHMT family. As to quaternary structure, homodimer. It depends on pyridoxal 5'-phosphate as a cofactor.

Its subcellular location is the cytoplasm. Its pathway is amino-acid biosynthesis; glycine biosynthesis; glycine from L-serine: step 1/1. Catalyzes the reversible interconversion of serine and glycine with a modified folate serving as the one-carbon carrier. Also exhibits a pteridine-independent aldolase activity toward beta-hydroxyamino acids, producing glycine and aldehydes, via a retro-aldol mechanism. The sequence is that of Serine hydroxymethyltransferase from Cenarchaeum symbiosum (strain A).